Consider the following 1064-residue polypeptide: Carbamoyl phosphate synthase large chain (1064 aa).

The tract at residues Met-1–Glu-401 is carboxyphosphate synthetic domain. ATP-binding residues include Arg-129, Arg-169, Gly-175, Gly-176, Lys-208, Ile-210, Glu-215, Gly-241, Ile-242, His-243, Gln-284, and Glu-298. An ATP-grasp 1 domain is found at Lys-133–Ile-327. Gln-284, Glu-298, and Asn-300 together coordinate Mg(2+). Mn(2+) is bound by residues Gln-284, Glu-298, and Asn-300. The oligomerization domain stretch occupies residues Ile-402–Ser-546. The tract at residues Leu-547–Gly-929 is carbamoyl phosphate synthetic domain. The ATP-grasp 2 domain maps to Asn-671–Leu-861. Residues Arg-707, Ser-746, Leu-748, Glu-752, Gly-777, Val-778, His-779, Ser-780, Gln-820, and Glu-832 each coordinate ATP. 3 residues coordinate Mg(2+): Gln-820, Glu-832, and Asn-834. Mn(2+)-binding residues include Gln-820, Glu-832, and Asn-834. One can recognise an MGS-like domain in the interval Phe-930 to Ser-1064. An allosteric domain region spans residues Phe-930–Ser-1064.

The protein belongs to the CarB family. Composed of two chains; the small (or glutamine) chain promotes the hydrolysis of glutamine to ammonia, which is used by the large (or ammonia) chain to synthesize carbamoyl phosphate. Tetramer of heterodimers (alpha,beta)4. Mg(2+) is required as a cofactor. The cofactor is Mn(2+).

The enzyme catalyses hydrogencarbonate + L-glutamine + 2 ATP + H2O = carbamoyl phosphate + L-glutamate + 2 ADP + phosphate + 2 H(+). It carries out the reaction hydrogencarbonate + NH4(+) + 2 ATP = carbamoyl phosphate + 2 ADP + phosphate + 2 H(+). The protein operates within amino-acid biosynthesis; L-arginine biosynthesis; carbamoyl phosphate from bicarbonate: step 1/1. It functions in the pathway pyrimidine metabolism; UMP biosynthesis via de novo pathway; (S)-dihydroorotate from bicarbonate: step 1/3. Its function is as follows. Large subunit of the glutamine-dependent carbamoyl phosphate synthetase (CPSase). CPSase catalyzes the formation of carbamoyl phosphate from the ammonia moiety of glutamine, carbonate, and phosphate donated by ATP, constituting the first step of 2 biosynthetic pathways, one leading to arginine and/or urea and the other to pyrimidine nucleotides. The large subunit (synthetase) binds the substrates ammonia (free or transferred from glutamine from the small subunit), hydrogencarbonate and ATP and carries out an ATP-coupled ligase reaction, activating hydrogencarbonate by forming carboxy phosphate which reacts with ammonia to form carbamoyl phosphate. In Oenococcus oeni (strain ATCC BAA-331 / PSU-1), this protein is Carbamoyl phosphate synthase large chain.